The sequence spans 113 residues: U11-theraphotoxin-Hhn1a (113 aa).

The first 21 residues, 1–21 (MNTVRVAFLLVFVLAVSLGQA), serve as a signal peptide directing secretion. Residues 22–74 (DKDENRMEMQEKTEQGKSYLDFAENLLLQKLEELEAKLLEEDSEESRNSRQKR) constitute a propeptide that is removed on maturation. Positions 61 to 83 (EEDSEESRNSRQKRCIGEGVPCD) are disordered. Disulfide bonds link Cys75–Cys90, Cys82–Cys95, and Cys89–Cys110.

Belongs to the neurotoxin 14 (magi-1) family. 01 (HNTX-16) subfamily. Expressed by the venom gland.

Its subcellular location is the secreted. In terms of biological role, probable ion channel inhibitor. This Cyriopagopus hainanus (Chinese bird spider) protein is U11-theraphotoxin-Hhn1a.